The primary structure comprises 198 residues: ATP-dependent Clp protease proteolytic subunit (198 aa).

The Nucleophile role is filled by Ser102. His127 is an active-site residue.

This sequence belongs to the peptidase S14 family. As to quaternary structure, fourteen ClpP subunits assemble into 2 heptameric rings which stack back to back to give a disk-like structure with a central cavity, resembling the structure of eukaryotic proteasomes.

The protein resides in the cytoplasm. It carries out the reaction Hydrolysis of proteins to small peptides in the presence of ATP and magnesium. alpha-casein is the usual test substrate. In the absence of ATP, only oligopeptides shorter than five residues are hydrolyzed (such as succinyl-Leu-Tyr-|-NHMec, and Leu-Tyr-Leu-|-Tyr-Trp, in which cleavage of the -Tyr-|-Leu- and -Tyr-|-Trp bonds also occurs).. Functionally, cleaves peptides in various proteins in a process that requires ATP hydrolysis. Has a chymotrypsin-like activity. Plays a major role in the degradation of misfolded proteins. In Brachyspira hyodysenteriae (strain ATCC 49526 / WA1), this protein is ATP-dependent Clp protease proteolytic subunit.